The primary structure comprises 512 residues: Protein SHC1 (512 aa).

Acidic residues predominate over residues 101–113 (EQDEFENDVEDDA). Disordered regions lie at residues 101–122 (EQDE…EKSQ) and 144–165 (DGNS…SVAL). Sel1-like repeat units follow at residues 318-353 (PDAQ…KRLH), 354-389 (IESV…TKNH), 390-429 (PAAM…SMAS), and 433-470 (CGAP…ALGH).

Belongs to the SKT5 family.

Its subcellular location is the cytoplasm. It localises to the cytoplasmic granule membrane. Required for the activation of chitin synthase III (CHS3) activity during the sporulation process. The protein is Protein SHC1 (SHC1) of Saccharomyces cerevisiae (strain YJM789) (Baker's yeast).